The primary structure comprises 96 residues: Large ribosomal subunit protein bL27 (96 aa).

Residues 1–9 constitute a propeptide that is removed on maturation; sequence MLRLDLQFF.

It belongs to the bacterial ribosomal protein bL27 family. Post-translationally, the N-terminus is cleaved by ribosomal processing cysteine protease Prp.

In Geobacillus kaustophilus (strain HTA426), this protein is Large ribosomal subunit protein bL27.